Reading from the N-terminus, the 366-residue chain is Chorismate synthase (366 aa).

The NADP(+) site is built by Arg-48 and Arg-54. FMN contacts are provided by residues 125–127, 238–239, Gly-278, 293–297, and Arg-319; these read RSS, NA, and KPTSS.

The protein belongs to the chorismate synthase family. In terms of assembly, homotetramer. FMNH2 serves as cofactor.

It catalyses the reaction 5-O-(1-carboxyvinyl)-3-phosphoshikimate = chorismate + phosphate. Its pathway is metabolic intermediate biosynthesis; chorismate biosynthesis; chorismate from D-erythrose 4-phosphate and phosphoenolpyruvate: step 7/7. Its function is as follows. Catalyzes the anti-1,4-elimination of the C-3 phosphate and the C-6 proR hydrogen from 5-enolpyruvylshikimate-3-phosphate (EPSP) to yield chorismate, which is the branch point compound that serves as the starting substrate for the three terminal pathways of aromatic amino acid biosynthesis. This reaction introduces a second double bond into the aromatic ring system. This chain is Chorismate synthase, found in Chromobacterium violaceum (strain ATCC 12472 / DSM 30191 / JCM 1249 / CCUG 213 / NBRC 12614 / NCIMB 9131 / NCTC 9757 / MK).